The chain runs to 78 residues: uncharacterized protein (78 aa).

This is an uncharacterized protein from Plasmodium falciparum (isolate fcm17 / Senegal).